The following is a 490-amino-acid chain: Aspartyl/glutamyl-tRNA(Asn/Gln) amidotransferase subunit B (490 aa).

Belongs to the GatB/GatE family. GatB subfamily. In terms of assembly, heterotrimer of A, B and C subunits.

It carries out the reaction L-glutamyl-tRNA(Gln) + L-glutamine + ATP + H2O = L-glutaminyl-tRNA(Gln) + L-glutamate + ADP + phosphate + H(+). The enzyme catalyses L-aspartyl-tRNA(Asn) + L-glutamine + ATP + H2O = L-asparaginyl-tRNA(Asn) + L-glutamate + ADP + phosphate + 2 H(+). Functionally, allows the formation of correctly charged Asn-tRNA(Asn) or Gln-tRNA(Gln) through the transamidation of misacylated Asp-tRNA(Asn) or Glu-tRNA(Gln) in organisms which lack either or both of asparaginyl-tRNA or glutaminyl-tRNA synthetases. The reaction takes place in the presence of glutamine and ATP through an activated phospho-Asp-tRNA(Asn) or phospho-Glu-tRNA(Gln). In Methylobacterium radiotolerans (strain ATCC 27329 / DSM 1819 / JCM 2831 / NBRC 15690 / NCIMB 10815 / 0-1), this protein is Aspartyl/glutamyl-tRNA(Asn/Gln) amidotransferase subunit B.